Reading from the N-terminus, the 518-residue chain is Light-independent protochlorophyllide reductase subunit B (518 aa).

A [4Fe-4S] cluster-binding site is contributed by Asp-36. Residue Asp-285 is the Proton donor of the active site. 420-421 (GL) contacts substrate.

This sequence belongs to the ChlB/BchB/BchZ family. Protochlorophyllide reductase is composed of three subunits; BchL, BchN and BchB. Forms a heterotetramer of two BchB and two BchN subunits. Requires [4Fe-4S] cluster as cofactor.

It catalyses the reaction chlorophyllide a + oxidized 2[4Fe-4S]-[ferredoxin] + 2 ADP + 2 phosphate = protochlorophyllide a + reduced 2[4Fe-4S]-[ferredoxin] + 2 ATP + 2 H2O. It participates in porphyrin-containing compound metabolism; bacteriochlorophyll biosynthesis (light-independent). In terms of biological role, component of the dark-operative protochlorophyllide reductase (DPOR) that uses Mg-ATP and reduced ferredoxin to reduce ring D of protochlorophyllide (Pchlide) to form chlorophyllide a (Chlide). This reaction is light-independent. The NB-protein (BchN-BchB) is the catalytic component of the complex. The protein is Light-independent protochlorophyllide reductase subunit B of Bradyrhizobium sp. (strain ORS 278).